The sequence spans 1698 residues: Protein 4.1 homolog (1698 aa).

The segment at 1–31 (MPAEIKPSAPAEPETPTKSKPKSSSSSHGKP) is disordered. Residues 12–27 (EPETPTKSKPKSSSSS) are compositionally biased toward low complexity. The region spanning 32 to 314 (ALARVTLLDG…EHHTFFRLMT (283 aa)) is the FERM domain. The segment at 317-434 (PVSKSKMFPV…KEEKERKERE (118 aa)) is hydrophilic. Disordered regions lie at residues 335 to 361 (GRTQ…SGAR) and 374 to 710 (EKEK…SDPT). The span at 374-448 (EKEKVARKSS…EEKKKAEKAA (75 aa)) shows a compositional bias: basic and acidic residues. Residues 449 to 461 (KAALAAGAAAGAA) show a composition bias toward low complexity. A phosphoserine mark is found at S471, S474, and S478. Residues 499–514 (KDGKDKSGKDKDKEVG) show a composition bias toward basic and acidic residues. Residues 562 to 571 (DGNTSPTRKS) show a composition bias toward polar residues. The residue at position 566 (S566) is a Phosphoserine. Over residues 579-589 (YDQDPNSRKSG) the composition is skewed to basic and acidic residues. A compositionally biased stretch (polar residues) spans 594–603 (EQLSPTSQQK). Basic and acidic residues predominate over residues 618–627 (ALKETAEKLK). Phosphoserine is present on residues S659 and S687. The span at 684–696 (RSYSPTKGPQGYS) shows a compositional bias: polar residues. Residue T689 is modified to Phosphothreonine. S697, S1398, S1401, and S1402 each carry phosphoserine. The interval 1286–1698 (GEIVQVDPND…EKIEIQQQTQ (413 aa)) is C-terminal (CTD). T1407 is modified (phosphothreonine). Residues 1509 to 1532 (LGKNAKTEQLEEKTVATTRTHDPN) are compositionally biased toward basic and acidic residues. The segment at 1509–1599 (LGKNAKTEQL…SPLFTTSATT (91 aa)) is disordered. A compositionally biased stretch (polar residues) spans 1533–1554 (KQQQRVVTQEVKTTATVTSGDQ). Residues 1561 to 1571 (VSSTSSGDSGT) show a composition bias toward low complexity. A compositionally biased stretch (polar residues) spans 1584–1599 (RTDNQKSPLFTTSATT). S1590 bears the Phosphoserine mark.

In terms of tissue distribution, at onset of germ band retraction, expression is seen in epidermis, hindgut and foregut. During retraction, expression extends to tracheal branches and salivary glands.

The protein resides in the cell junction. The protein localises to the septate junction. Functionally, an integral component of the septate junction. May play a role in cell-cell interactions that are necessary for proper development. Vital for embryonic development. The polypeptide is Protein 4.1 homolog (cora) (Drosophila melanogaster (Fruit fly)).